Consider the following 105-residue polypeptide: RxLR effector protein PITG_18670 (105 aa).

The first 21 residues, 1–21 (MRSIFYFALAFAALTCSNASA), serve as a signal peptide directing secretion. The RxLR-dEER signature appears at 39 to 57 (RSLRVAGQEVARGDRGEEI).

The protein belongs to the RxLR effector family.

Its subcellular location is the secreted. It localises to the host nucleus. It is found in the host nucleolus. The protein resides in the host cytoplasm. Effector that enhances P.infestans colonization of Nicotiana benthamiana leaves. This Phytophthora infestans (strain T30-4) (Potato late blight agent) protein is RxLR effector protein PITG_18670.